Here is a 103-residue protein sequence, read N- to C-terminus: Large ribosomal subunit protein bL21 (103 aa).

Belongs to the bacterial ribosomal protein bL21 family. Part of the 50S ribosomal subunit. Contacts protein L20.

This protein binds to 23S rRNA in the presence of protein L20. The polypeptide is Large ribosomal subunit protein bL21 (Chromobacterium violaceum (strain ATCC 12472 / DSM 30191 / JCM 1249 / CCUG 213 / NBRC 12614 / NCIMB 9131 / NCTC 9757 / MK)).